Consider the following 516-residue polypeptide: L-amino-acid oxidase (516 aa).

An N-terminal signal peptide occupies residues 1–18 (MNVFFMFSLLFLAALGSC). An intrachain disulfide couples C28 to C191. Residues 61 to 62 (MS), 81 to 82 (EA), R89, and 105 to 108 (GPMR) contribute to the FAD site. R108 is a binding site for substrate. Residue N190 is glycosylated (N-linked (GlcNAc...) asparagine). Residue H241 coordinates substrate. FAD is bound at residue V279. Residues C349 and C430 are joined by a disulfide bond. An N-linked (GlcNAc...) asparagine glycan is attached at N379. Y390 contacts substrate. FAD contacts are provided by residues E475, 481–486 (HGWIDS), and 482–487 (GWIDSS). Substrate is bound by residues 481-482 (HG) and 482-483 (GW).

Belongs to the flavin monoamine oxidase family. FIG1 subfamily. In terms of assembly, homodimer; non-covalently linked. Requires FAD as cofactor. N-glycosylated. As to expression, expressed by the venom gland.

Its subcellular location is the secreted. It carries out the reaction an L-alpha-amino acid + O2 + H2O = a 2-oxocarboxylate + H2O2 + NH4(+). Its function is as follows. Catalyzes an oxidative deamination of predominantly hydrophobic and aromatic L-amino acids, thus producing hydrogen peroxide that may contribute to the diverse toxic effects of this enzyme. Exhibits diverse biological activities, such as hemorrhage, hemolysis, edema, apoptosis of vascular endothelial cells or tumor cell lines, antibacterial and antiparasitic activities, as well as regulation of platelet aggregation. Effects of snake L-amino oxidases on platelets are controversial, since they either induce aggregation or inhibit agonist-induced aggregation. These different effects are probably due to different experimental conditions. Displays dose-dependent inhibition on HIV-1 infection and replication. This Trimeresurus stejnegeri (Chinese green tree viper) protein is L-amino-acid oxidase.